The primary structure comprises 264 residues: Phycocyanobilin:ferredoxin oxidoreductase (264 aa).

It belongs to the HY2 family.

It carries out the reaction (2R,3Z)-phycocyanobilin + 4 oxidized [2Fe-2S]-[ferredoxin] = biliverdin IXalpha + 4 reduced [2Fe-2S]-[ferredoxin] + 4 H(+). Its function is as follows. Catalyzes the four-electron reduction of biliverdin IX-alpha (2-electron reduction at both the A and D rings); the reaction proceeds via an isolatable 2-electron intermediate, 181,182-dihydrobiliverdin. In Prochlorococcus marinus (strain MIT 9303), this protein is Phycocyanobilin:ferredoxin oxidoreductase.